A 104-amino-acid polypeptide reads, in one-letter code: Integration host factor subunit beta (104 aa).

Positions 83–95 are enriched in basic and acidic residues; that stretch reads GKEMRERLNRDSG. Residues 83 to 104 form a disordered region; that stretch reads GKEMRERLNRDSGDDAPTSDTA.

The protein belongs to the bacterial histone-like protein family. In terms of assembly, heterodimer of an alpha and a beta chain.

This protein is one of the two subunits of integration host factor, a specific DNA-binding protein that functions in genetic recombination as well as in transcriptional and translational control. The sequence is that of Integration host factor subunit beta from Rhodopseudomonas palustris (strain ATCC BAA-98 / CGA009).